Reading from the N-terminus, the 230-residue chain is Sugar fermentation stimulation protein homolog (230 aa).

This sequence belongs to the SfsA family.

The protein is Sugar fermentation stimulation protein homolog of Clostridium tetani (strain Massachusetts / E88).